A 40-amino-acid chain; its full sequence is Dolichyl-diphosphooligosaccharide--protein glycosyltransferase subunit 4 (40 aa).

At 1–4 (MITD) the chain is on the lumenal side. The chain crosses the membrane as a helical span at residues 5–25 (VQLAIFSNVLGVFLFLLVVAY). Over 26 to 40 (HYINANTGKPIPKAK) the chain is Cytoplasmic.

Belongs to the OST4 family. As to quaternary structure, component of the oligosaccharyltransferase (OST) complex.

It is found in the endoplasmic reticulum membrane. Its function is as follows. Subunit of the oligosaccharyl transferase (OST) complex that catalyzes the initial transfer of a defined glycan (Glc(3)Man(9)GlcNAc(2) in eukaryotes) from the lipid carrier dolichol-pyrophosphate to an asparagine residue within an Asn-X-Ser/Thr consensus motif in nascent polypeptide chains, the first step in protein N-glycosylation. N-glycosylation occurs cotranslationally and the complex associates with the Sec61 complex at the channel-forming translocon complex that mediates protein translocation across the endoplasmic reticulum (ER). All subunits are required for a maximal enzyme activity. The protein is Dolichyl-diphosphooligosaccharide--protein glycosyltransferase subunit 4 of Drosophila ananassae (Fruit fly).